Reading from the N-terminus, the 201-residue chain is MSNVLVIQSSILGSYSQSAKLLDNFAVEWKQKHPTDNIVIRDLAAEPLPVLDGEIIAALGGNGELNERQKAAAELSLNLIEEVKTADYVAIAVPMYNFGIPVQLKTWIDLICRAGVTFSYTENGPQGLLVGKKVLVVTTTGGAHRNTATDLALAHIQAVLSLVGLNDISVAYAETLNMGPEAQERGLAEATKAIQAFIAAH.

Residues Ser10, 16–18 (SQS), 95–98 (MYNF), and 139–142 (TTGG) each bind FMN.

The protein belongs to the azoreductase type 1 family. In terms of assembly, homodimer. The cofactor is FMN.

The enzyme catalyses 2 a quinone + NADH + H(+) = 2 a 1,4-benzosemiquinone + NAD(+). It carries out the reaction N,N-dimethyl-1,4-phenylenediamine + anthranilate + 2 NAD(+) = 2-(4-dimethylaminophenyl)diazenylbenzoate + 2 NADH + 2 H(+). Functionally, quinone reductase that provides resistance to thiol-specific stress caused by electrophilic quinones. In terms of biological role, also exhibits azoreductase activity. Catalyzes the reductive cleavage of the azo bond in aromatic azo compounds to the corresponding amines. This Tolumonas auensis (strain DSM 9187 / NBRC 110442 / TA 4) protein is FMN-dependent NADH:quinone oxidoreductase.